The sequence spans 83 residues: Cytochrome b559 subunit alpha (83 aa).

The helical transmembrane segment at V21–W35 threads the bilayer. H23 is a heme binding site.

It belongs to the PsbE/PsbF family. As to quaternary structure, heterodimer of an alpha subunit and a beta subunit. PSII is composed of 1 copy each of membrane proteins PsbA, PsbB, PsbC, PsbD, PsbE, PsbF, PsbH, PsbI, PsbJ, PsbK, PsbL, PsbM, PsbT, PsbX, PsbY, PsbZ, Psb30/Ycf12, at least 3 peripheral proteins of the oxygen-evolving complex and a large number of cofactors. It forms dimeric complexes. Heme b serves as cofactor.

Its subcellular location is the plastid. The protein localises to the chloroplast thylakoid membrane. Its function is as follows. This b-type cytochrome is tightly associated with the reaction center of photosystem II (PSII). PSII is a light-driven water:plastoquinone oxidoreductase that uses light energy to abstract electrons from H(2)O, generating O(2) and a proton gradient subsequently used for ATP formation. It consists of a core antenna complex that captures photons, and an electron transfer chain that converts photonic excitation into a charge separation. The polypeptide is Cytochrome b559 subunit alpha (Panax ginseng (Korean ginseng)).